We begin with the raw amino-acid sequence, 550 residues long: MSTFGYRRGLSKYESIDEDELLASLSPEELKELERELEDIEPDRNLPVGLRQKSLTEKTPTGNFSREALMAYWEKESQKLLEKERLGECGKVAEEDKEESEEELIFTESNSEVSEEVCTEDEEESQEEEEDSEEEEDSEEEEETTEATKHINGTVSYNSVNTDNSKPKTFKSQIENINLTNGNSGRTQRNSESPAAIHPCGNPTVIEDALEKIRNNDPDTTEVNLNNIENITTQTLSRFAEALKENTVVKTFSLANTHADDAAAIAIADMLKVNEHITSVNVESNFITGKGILAIMRALQHNTVLTELRFHNQRHIMGSQVEMEIVKLLKENTTLLRLGYHFELPGPRMSMTSILTRNMDKQRQKRMQEQKQQEGHDGGAALRTKVWQRGTPGSSPYASPRQSPWSSPKVSKKVHTGRSRPPSPVAPPPPPPPPPLPPHMLPPPPPPPAPPLPEKKLITRNIAEVIKQQESAQRALQNGQRKKKGKKVKKQPNNILKEIKNSLRSVQEKKMEDSSRPSTPQRSVHENLMEAIRGSSIRQLRRVEVPEALR.

The interval 1–47 (MSTFGYRRGLSKYESIDEDELLASLSPEELKELERELEDIEPDRNLP) is interaction with tropomyosin alpha. Interaction with actin regions lie at residues 1–165 (MSTF…TDNS), 166–500 (KPKT…KEIK), and 524–543 (VHENLMEAIRGSSIRQLRRV). Phosphoserine occurs at positions 11, 15, and 24. Over residues 84–94 (ERLGECGKVAE) the composition is skewed to basic and acidic residues. Disordered stretches follow at residues 84–202 (ERLG…PCGN) and 359–527 (MDKQ…VHEN). Residues 91–147 (KVAEEDKEESEEELIFTESNSEVSEEVCTEDEEESQEEEEDSEEEEDSEEEEETTEA) adopt a coiled-coil conformation. Acidic residues-rich tracts occupy residues 95–105 (EDKEESEEELI) and 113–145 (VSEEVCTEDEEESQEEEEDSEEEEDSEEEEETT). 2 stretches are compositionally biased toward polar residues: residues 151 to 164 (INGTVSYNSVNTDN) and 170 to 193 (FKSQIENINLTNGNSGRTQRNSES). A compositionally biased stretch (basic and acidic residues) spans 359 to 377 (MDKQRQKRMQEQKQQEGHD). Positions 391–402 (TPGSSPYASPRQ) are enriched in polar residues. Serine 407 carries the phosphoserine modification. Over residues 421-452 (PPSPVAPPPPPPPPPLPPHMLPPPPPPPAPPL) the composition is skewed to pro residues. Residues 468-479 (QQESAQRALQNG) are compositionally biased toward polar residues. Residues 480–490 (QRKKKGKKVKK) show a composition bias toward basic residues. The span at 497–515 (KEIKNSLRSVQEKKMEDSS) shows a compositional bias: basic and acidic residues. Residues 524-543 (VHENLMEAIRGSSIRQLRRV) enclose the WH2 domain.

Belongs to the tropomodulin family. In terms of assembly, can bind at least three actin monomers and thereby provides a nucleus for actin filament formation. Interacts (via N-terminus) with tropomyosin alpha (TPM1) (via N-terminus). May also interact with TPM2 (via N-terminus). Interacts with FLII. Detected in neonate heart (at protein level). Detected in embryonic heart and in pharyngeal arches. Detected in adult heart.

Its subcellular location is the cytoplasm. It is found in the myofibril. It localises to the sarcomere. The protein resides in the m line. The protein localises to the cytoskeleton. Mediates nucleation of actin filaments and thereby promotes actin polymerization. Plays a role in the regulation of actin filament length. Required for normal sarcomere organization in the heart, and for normal heart function. The sequence is that of Leiomodin-2 (Lmod2) from Mus musculus (Mouse).